A 391-amino-acid polypeptide reads, in one-letter code: MSESNGTDVLPLTAQVPLAFLMSLLAFAITIGNAVVILAFVADRNLRHRSNYFFLNLAISDFFVGVISIPLYIPHTLFNWNFGSGICMFWLITDYLLCTASVYSIVLISYDRYQSVSNAVRYRAQHTGILKIVAQMVAVWILAFLVNGPMILASDSWKNSTNTEECEPGFVTEWYILAITAFLEFLLPVSLVVYFSVQIYWSLWKRGSLSRCPSHAGFIATSSRGTGHSRRTGLACRTSLPGLKEPAASLHSESPRGKSSLLVSLRTHMSGSIIAFKVGSFCRSESPVLHQREHVELLRGRKLARSLAVLLSAFAICWAPYCLFTIVLSTYRRGERPKSIWYSIAFWLQWFNSLINPFLYPLCHRRFQKAFWKILCVTKQPAPSQTQSVSS.

The Extracellular segment spans residues methionine 1–alanine 19. Asparagine 5 carries an N-linked (GlcNAc...) asparagine glycan. The helical transmembrane segment at phenylalanine 20 to phenylalanine 40 threads the bilayer. Over valine 41–tyrosine 52 the chain is Cytoplasmic. A helical transmembrane segment spans residues phenylalanine 53 to isoleucine 73. Residues proline 74–cysteine 87 lie on the Extracellular side of the membrane. Cysteine 87 and cysteine 166 are disulfide-bonded. A helical transmembrane segment spans residues methionine 88–isoleucine 108. The Cytoplasmic portion of the chain corresponds to serine 109–lysine 131. Residues isoleucine 132–leucine 152 form a helical membrane-spanning segment. Topologically, residues alanine 153–tryptophan 174 are extracellular. Residue asparagine 159 is glycosylated (N-linked (GlcNAc...) asparagine). Residues tyrosine 175–phenylalanine 195 traverse the membrane as a helical segment. Residues serine 196–serine 306 lie on the Cytoplasmic side of the membrane. A helical transmembrane segment spans residues leucine 307–valine 327. Residues leucine 328–serine 343 are Extracellular-facing. Residues isoleucine 344–histidine 364 traverse the membrane as a helical segment. Topologically, residues arginine 365 to serine 391 are cytoplasmic.

This sequence belongs to the G-protein coupled receptor 1 family. Interacts with TSPAN4.

The protein resides in the cell membrane. Its function is as follows. The H4 subclass of histamine receptors could mediate the histamine signals in peripheral tissues. Displays a significant level of constitutive activity (spontaneous activity in the absence of agonist). The polypeptide is Histamine H4 receptor (Hrh4) (Rattus norvegicus (Rat)).